A 355-amino-acid chain; its full sequence is Protein RecA (355 aa).

67–74 (GPESSGKT) serves as a coordination point for ATP.

Belongs to the RecA family.

The protein resides in the cytoplasm. Can catalyze the hydrolysis of ATP in the presence of single-stranded DNA, the ATP-dependent uptake of single-stranded DNA by duplex DNA, and the ATP-dependent hybridization of homologous single-stranded DNAs. It interacts with LexA causing its activation and leading to its autocatalytic cleavage. The sequence is that of Protein RecA from Histophilus somni (strain 129Pt) (Haemophilus somnus).